A 141-amino-acid chain; its full sequence is 4-hydroxybenzoyl-CoA thioesterase (141 aa).

Aspartate 17 is an active-site residue. Residues tryptophan 47, 59-61 (TPI), and lysine 90 each bind substrate.

This sequence belongs to the 4-hydroxybenzoyl-CoA thioesterase family. Homotetramer.

The catalysed reaction is 4-hydroxybenzoyl-CoA + H2O = 4-hydroxybenzoate + CoA + H(+). It participates in xenobiotic degradation; 4-chlorobenzoate degradation; 4-hydroxybenzoate from 4-chlorobenzoate: step 3/3. With respect to regulation, unaffected by EDTA, Mg(2+), Mn(2+), Fe(2+), Ca(2+), Co(2+) and Zn(2+). Its function is as follows. Hydrolyzes 4-hydroxybenzoate-CoA, and to a lesser extent benzoyl-CoA and 4-chlorobenzoate-CoA. Not active against aliphatic acyl-CoA thioesters, including palmitoyl-CoA, hexanoyl-CoA and acetyl-CoA. This chain is 4-hydroxybenzoyl-CoA thioesterase, found in Pseudomonas sp. (strain CBS-3).